Reading from the N-terminus, the 399-residue chain is Phosphoglycerate kinase (399 aa).

Substrate is bound by residues 24–26 (DLN), arginine 41, 64–67 (HLGR), arginine 123, and arginine 160. Residues lysine 210, glycine 298, glutamate 329, and 355–358 (GGDS) contribute to the ATP site.

The protein belongs to the phosphoglycerate kinase family. As to quaternary structure, monomer.

The protein resides in the cytoplasm. The enzyme catalyses (2R)-3-phosphoglycerate + ATP = (2R)-3-phospho-glyceroyl phosphate + ADP. It participates in carbohydrate degradation; glycolysis; pyruvate from D-glyceraldehyde 3-phosphate: step 2/5. The sequence is that of Phosphoglycerate kinase from Salinispora tropica (strain ATCC BAA-916 / DSM 44818 / JCM 13857 / NBRC 105044 / CNB-440).